We begin with the raw amino-acid sequence, 348 residues long: D-erythrose-4-phosphate dehydrogenase (348 aa).

NAD(+) is bound by residues 12-13 (RI) and R81. Substrate is bound by residues 154-156 (SCT), R200, 213-214 (TK), and R236. C155 serves as the catalytic Nucleophile. An NAD(+)-binding site is contributed by N318.

The protein belongs to the glyceraldehyde-3-phosphate dehydrogenase family. Epd subfamily. Homotetramer.

It is found in the cytoplasm. It catalyses the reaction D-erythrose 4-phosphate + NAD(+) + H2O = 4-phospho-D-erythronate + NADH + 2 H(+). Its pathway is cofactor biosynthesis; pyridoxine 5'-phosphate biosynthesis; pyridoxine 5'-phosphate from D-erythrose 4-phosphate: step 1/5. Functionally, catalyzes the NAD-dependent conversion of D-erythrose 4-phosphate to 4-phosphoerythronate. This is D-erythrose-4-phosphate dehydrogenase from Salmonella schwarzengrund (strain CVM19633).